A 302-amino-acid polypeptide reads, in one-letter code: Dermonecrotic toxin LiSicTox-alphaIA2bii (302 aa).

The first 14 residues, 1-14 (IALILVCWSVLSQA), serve as a signal peptide directing secretion. Residues 15 to 22 (AQTDVEGR) constitute a propeptide that is removed on maturation. Histidine 34 is an active-site residue. Residues glutamate 54 and aspartate 56 each contribute to the Mg(2+) site. The active-site Nucleophile is histidine 70. Intrachain disulfides connect cysteine 74–cysteine 80 and cysteine 76–cysteine 219. Aspartate 114 provides a ligand contact to Mg(2+). The N-linked (GlcNAc...) asparagine glycan is linked to asparagine 279.

It belongs to the arthropod phospholipase D family. Class II subfamily. It depends on Mg(2+) as a cofactor. In terms of tissue distribution, expressed by the venom gland.

The protein resides in the secreted. It catalyses the reaction an N-(acyl)-sphingosylphosphocholine = an N-(acyl)-sphingosyl-1,3-cyclic phosphate + choline. The catalysed reaction is an N-(acyl)-sphingosylphosphoethanolamine = an N-(acyl)-sphingosyl-1,3-cyclic phosphate + ethanolamine. The enzyme catalyses a 1-acyl-sn-glycero-3-phosphocholine = a 1-acyl-sn-glycero-2,3-cyclic phosphate + choline. It carries out the reaction a 1-acyl-sn-glycero-3-phosphoethanolamine = a 1-acyl-sn-glycero-2,3-cyclic phosphate + ethanolamine. In terms of biological role, dermonecrotic toxins cleave the phosphodiester linkage between the phosphate and headgroup of certain phospholipids (sphingolipid and lysolipid substrates), forming an alcohol (often choline) and a cyclic phosphate. This toxin acts on sphingomyelin (SM). It may also act on ceramide phosphoethanolamine (CPE), lysophosphatidylcholine (LPC) and lysophosphatidylethanolamine (LPE), but not on lysophosphatidylserine (LPS), and lysophosphatidylglycerol (LPG). It acts by transphosphatidylation, releasing exclusively cyclic phosphate products as second products. Induces dermonecrosis, hemolysis, increased vascular permeability, edema, inflammatory response, and platelet aggregation. This chain is Dermonecrotic toxin LiSicTox-alphaIA2bii, found in Loxosceles intermedia (Brown spider).